We begin with the raw amino-acid sequence, 28 residues long: Ranatuerin-2AVa (28 aa).

Residues Cys23 and Cys28 are joined by a disulfide bond.

As to expression, expressed by the skin glands.

The protein resides in the secreted. In terms of biological role, has antibacterial activity against the Gram positive bacterium L.lactis. This Rana arvalis (Moor frog) protein is Ranatuerin-2AVa.